Consider the following 269-residue polypeptide: Orotidine 5'-phosphate decarboxylase (269 aa).

Lys92 serves as the catalytic Proton donor.

The protein belongs to the OMP decarboxylase family. Type 2 subfamily.

The catalysed reaction is orotidine 5'-phosphate + H(+) = UMP + CO2. The protein operates within pyrimidine metabolism; UMP biosynthesis via de novo pathway; UMP from orotate: step 2/2. The protein is Orotidine 5'-phosphate decarboxylase of Natronomonas pharaonis (strain ATCC 35678 / DSM 2160 / CIP 103997 / JCM 8858 / NBRC 14720 / NCIMB 2260 / Gabara) (Halobacterium pharaonis).